A 568-amino-acid chain; its full sequence is MAAATATAGTAACSSSSSSRGGSTDAAATSGVQPPPPPPATAPPEPLRKPRMDPRRRQAALSFLTNISLDGRPPLQDHEWGGGEEGGGTKPGARARLSLLAAGCNAFSAPGTAAAPWTAGSGSSPCPLPPSLVPRVLGEPSQPPRSAPAVTGAQLQLPDGPGGAGQEELEEDDAFTNVQVPSASFLGSGTPGSTSGSRGRLNSFTQGILPIAFSRQNSQNYCALEQSGQGGSTSALEQLQRSRRRLISQRSSLETLEDIEENAPLRRCRTLSGSPRPKNFKKIHFIKNMRQHDTKNGRDLKLDGGRQSAGAMSLKEIIGLEGVELGADGKTVSYTQFLLPTNAFGNRRNTIDSTASFSQFRSLSHRSLSMGRAGSTQGSLDAGSDLGDFMDYDPNLLDDPQWPCGKHKRVLTFPSYMTTVIDYVKPSDLKKDMNETFKEKFPHIKLTLSKIRSLKREMRKLAQEDCGFEEPTVAMAFVYFEKLALRGKLNKQNRKLCAGACVLLAAKVGSDLRKHEVKHLIDKLEEKFRLNRRELIAFEFPVLVALEFALHLPEHEVMPHYRRLIQSS.

Residues 1 to 31 are compositionally biased toward low complexity; the sequence is MAAATATAGTAACSSSSSSRGGSTDAAATSG. Disordered regions lie at residues 1 to 94 and 130 to 169; these read MAAA…PGAR and PSLV…QEEL. An interaction with TDRD7 region spans residues 1-98; that stretch reads MAAATATAGT…TKPGARARLS (98 aa). Residues 33–45 show a composition bias toward pro residues; the sequence is QPPPPPPATAPPE. Positions 46–56 are enriched in basic and acidic residues; that stretch reads PLRKPRMDPRR. The interval 140 to 427 is interaction with CDK3; it reads PSQPPRSAPA…TTVIDYVKPS (288 aa). Ser248 carries the phosphoserine modification. Phosphoserine; by CDK2 and CDK3 is present on Ser274. Thr350 is modified (phosphothreonine).

The protein belongs to the cyclin family. In terms of assembly, found in a complex with p53/TP53. Found in a number of complexes with CDK2, CDK3, CDK5, ABL1, TDRD7, CDK17, CCNA1, CCNE1 and TP73. Interacts with CDK2, CDK3, CDK5, ABL1 and TDRD7. Phosphorylated on Ser-274 by CCNE1/CDK3. Phosphorylated on serine/threonine residues by CDK5 and on tyrosine residues by ABL1. Also phosphorylated in vitro by CCNA1/CDK2, CCNE1/CDK2, CCNA1/CDK3 and CCNE1/CDK3. Ubiquitous. Expressed in postnatal day 1 (P1), in postmitotic neurons of the subplate, cortex (V/VI) and marginal zone; in postnatal day 7 (P7), in all layers of the cerebral cortex and in the CA1 and CA2 regions of the hippocampus (at protein level). Highly expressed in brain, kidney, liver and lung.

It localises to the nucleus. It is found in the cytoplasm. The protein localises to the cell projection. Its subcellular location is the growth cone. In terms of biological role, cyclin-dependent kinase binding protein. Enhances cyclin-dependent kinase tyrosine phosphorylation by nonreceptor tyrosine kinases, such as that of CDK5 by activated ABL1, which leads to increased CDK5 activity and is critical for neuronal development, and that of CDK2 by WEE1, which leads to decreased CDK2 activity and growth inhibition. Positively affects neuronal outgrowth. Plays a role as a regulator for p53/p73-induced cell death. The sequence is that of CDK5 and ABL1 enzyme substrate 1 (Cables1) from Mus musculus (Mouse).